A 409-amino-acid polypeptide reads, in one-letter code: NADH-quinone oxidoreductase subunit D (409 aa).

This sequence belongs to the complex I 49 kDa subunit family. As to quaternary structure, NDH-1 is composed of 14 different subunits. Subunits NuoB, C, D, E, F, and G constitute the peripheral sector of the complex.

The protein resides in the cell inner membrane. The enzyme catalyses a quinone + NADH + 5 H(+)(in) = a quinol + NAD(+) + 4 H(+)(out). Its function is as follows. NDH-1 shuttles electrons from NADH, via FMN and iron-sulfur (Fe-S) centers, to quinones in the respiratory chain. The immediate electron acceptor for the enzyme in this species is believed to be ubiquinone. Couples the redox reaction to proton translocation (for every two electrons transferred, four hydrogen ions are translocated across the cytoplasmic membrane), and thus conserves the redox energy in a proton gradient. The polypeptide is NADH-quinone oxidoreductase subunit D (Helicobacter pylori (strain Shi470)).